A 186-amino-acid polypeptide reads, in one-letter code: dCTP deaminase (186 aa).

Residue 107–112 (KSTYAR) coordinates dCTP. Catalysis depends on Glu133, which acts as the Proton donor/acceptor. Residues Gln152, Tyr166, and Gln176 each contribute to the dCTP site.

It belongs to the dCTP deaminase family. In terms of assembly, homotrimer.

The enzyme catalyses dCTP + H2O + H(+) = dUTP + NH4(+). It functions in the pathway pyrimidine metabolism; dUMP biosynthesis; dUMP from dCTP (dUTP route): step 1/2. In terms of biological role, catalyzes the deamination of dCTP to dUTP. This Campylobacter jejuni subsp. doylei (strain ATCC BAA-1458 / RM4099 / 269.97) protein is dCTP deaminase.